A 508-amino-acid polypeptide reads, in one-letter code: Protein FAM217A (508 aa).

This sequence belongs to the FAM217 family.

This Homo sapiens (Human) protein is Protein FAM217A (FAM217A).